A 328-amino-acid chain; its full sequence is P2Y purinoceptor 6 (328 aa).

Over 1–27 (MEQDNGTIQAPGLPPTTCVYREDFKRL) the chain is Extracellular. N-linked (GlcNAc...) asparagine glycosylation is present at Asn-5. Residues 28 to 48 (LLTPVYSVVLVVGLPLNICVI) traverse the membrane as a helical segment. Over 49-62 (AQICASRRTLTRSA) the chain is Cytoplasmic. The helical transmembrane segment at 63 to 83 (VYTLNLALADLMYACSLPLLI) threads the bilayer. Residues 84–101 (YNYARGDHWPFGDLACRF) are Extracellular-facing. Cys-99 and Cys-177 are oxidised to a cystine. The helical transmembrane segment at 102-122 (VRFLFYANLHGSILFLTCISF) threads the bilayer. Topologically, residues 123–144 (QRYLGICHPLASWHKRGGRRAA) are cytoplasmic. A helical transmembrane segment spans residues 145 to 165 (WVVCGVVWLAVTAQCLPTAVF). Residues 166 to 194 (AATGIQRNRTVCYDLSPPILSTRYLPYGM) are Extracellular-facing. A glycan (N-linked (GlcNAc...) asparagine) is linked at Asn-173. A helical membrane pass occupies residues 195-215 (ALTVIGFLLPFIALLACYCRM). Topologically, residues 216–236 (ARRLCRQDGPAGPVAQERRSK) are cytoplasmic. Residues 237-257 (AARMAVVVAAVFAISFLPFHI) traverse the membrane as a helical segment. Residues 258-280 (TKTAYLAVRSTPGVSCPVLETFA) are Extracellular-facing. The helical transmembrane segment at 281–303 (AAYKGTRPFASVNSVLDPILFYF) threads the bilayer. Topologically, residues 304-328 (TQQKFRRQPHDLLQRLTAKWQRQRV) are cytoplasmic.

This sequence belongs to the G-protein coupled receptor 1 family.

It localises to the cell membrane. Its function is as follows. Receptor for extracellular UTP &gt; ADP = 2-methylthio-ATP &gt; ADP-beta-S &gt; ATP = ATP-gamma-S. The activity of this receptor is mediated by G proteins which activate a phosphatidylinositol-calcium second messenger system. Functionally coupled to phospholipase C. The protein is P2Y purinoceptor 6 (P2ry6) of Mus musculus (Mouse).